A 41-amino-acid polypeptide reads, in one-letter code: MKDFTTYLSTAPVLTLVSLTAVAGLLIEINRFFPDALTAAF.

A helical membrane pass occupies residues 7–27 (YLSTAPVLTLVSLTAVAGLLI).

The protein belongs to the PsaJ family.

The protein resides in the plastid. It localises to the chloroplast thylakoid membrane. In terms of biological role, may help in the organization of the PsaE and PsaF subunits. This is Photosystem I reaction center subunit IX from Chlorella vulgaris (Green alga).